Here is a 138-residue protein sequence, read N- to C-terminus: Augmin complex subunit msd1 (138 aa).

Component of the augmin complex composed of dgt2, dgt3, dgt4, dgt5, dgt6, msd1, msd5 and wac. The complex interacts directly or indirectly with microtubules and is required for centrosome-independent generation of spindle microtubules.

It localises to the cytoplasm. The protein localises to the cytoskeleton. Its subcellular location is the spindle. Its function is as follows. As part of the augmin complex, plays a role in centrosome-independent generation of spindle microtubules. The complex is required for mitotic spindle assembly through its involvement in localizing gamma-tubulin to spindle microtubules. msd1 is required for microtubule nucleation from within the mitotic spindle and for localization of Grip71 to centrosomes and mitotic spindle. This Drosophila melanogaster (Fruit fly) protein is Augmin complex subunit msd1.